The primary structure comprises 269 residues: Diphthine synthase (269 aa).

Residues leucine 10, aspartate 87, valine 90, 115–116 (SI), leucine 166, alanine 209, and histidine 234 contribute to the S-adenosyl-L-methionine site.

Belongs to the diphthine synthase family. In terms of assembly, homodimer.

The catalysed reaction is 2-[(3S)-amino-3-carboxypropyl]-L-histidyl-[translation elongation factor 2] + 3 S-adenosyl-L-methionine = diphthine-[translation elongation factor 2] + 3 S-adenosyl-L-homocysteine + 3 H(+). The protein operates within protein modification; peptidyl-diphthamide biosynthesis. S-adenosyl-L-methionine-dependent methyltransferase that catalyzes the trimethylation of the amino group of the modified target histidine residue in translation elongation factor 2 (EF-2), to form an intermediate called diphthine. The three successive methylation reactions represent the second step of diphthamide biosynthesis. The polypeptide is Diphthine synthase (Pyrococcus furiosus (strain ATCC 43587 / DSM 3638 / JCM 8422 / Vc1)).